Reading from the N-terminus, the 98-residue chain is uncharacterized protein (98 aa).

A compositionally biased stretch (low complexity) spans Met1–Pro21. Positions Met1–Asp26 are disordered. A helical transmembrane segment spans residues Met29–Cys49.

The protein resides in the host membrane. This is an uncharacterized protein from Equine herpesvirus 2 (strain 86/87) (EHV-2).